We begin with the raw amino-acid sequence, 761 residues long: Xaa-Pro dipeptidyl-peptidase (761 aa).

Residues Ser-347, Asp-467, and His-497 each act as charge relay system in the active site.

The protein belongs to the peptidase S15 family. In terms of assembly, homodimer.

It is found in the cytoplasm. The enzyme catalyses Hydrolyzes Xaa-Pro-|- bonds to release unblocked, N-terminal dipeptides from substrates including Ala-Pro-|-p-nitroanilide and (sequentially) Tyr-Pro-|-Phe-Pro-|-Gly-Pro-|-Ile.. Functionally, removes N-terminal dipeptides sequentially from polypeptides having unsubstituted N-termini provided that the penultimate residue is proline. In Streptococcus agalactiae serotype V (strain ATCC BAA-611 / 2603 V/R), this protein is Xaa-Pro dipeptidyl-peptidase.